The sequence spans 367 residues: Cystinosin (367 aa).

The N-terminal stretch at 1–22 (MIRNWLTIFILFPLKLVEKCES) is a signal peptide. At 23-125 (SVSLTVPPVV…LVIRSSAISI (103 aa)) the chain is on the lumenal side. N36, N41, and N51 each carry an N-linked (GlcNAc...) (high mannose) asparagine glycan. N66 is a glycosylation site (N-linked (GlcNAc...) asparagine). N-linked (GlcNAc...) (high mannose) asparagine glycosylation is found at N84, N104, and N107. A PQ-loop 1 domain is found at 123-189 (ISIINQVIGW…LLWVPYIKEQ (67 aa)). The helical transmembrane segment at 126-150 (INQVIGWIYFVAWSISFYPQVIMNW) threads the bilayer. The Cytoplasmic segment spans residues 151-159 (RRKSVIGLS). Residues 160–179 (FDFVALNLTGFVAYSVFNIG) form a helical membrane-spanning segment. N166 contributes to the L-cystine binding site. The Lumenal portion of the chain corresponds to 180–202 (LLWVPYIKEQFLLKYPNGVNPVN). A helical membrane pass occupies residues 203-225 (SNDVFFSLHAVVLTLIIIVQCCL). D205 provides a ligand contact to H(+). At 226–234 (YERGGQRVS) the chain is on the cytoplasmic side. The chain crosses the membrane as a helical span at residues 235-257 (WPAIGFLVLAWLFAFVTMIVAAV). Topologically, residues 258–263 (GVTTWL) are lumenal. The region spanning 263–328 (LQFLFCFSYI…QSYNNDQWTL (66 aa)) is the PQ-loop 2 domain. The helical transmembrane segment at 264 to 289 (QFLFCFSYIKLAVTLVKYFPQAYMNF) threads the bilayer. L-cystine is bound by residues K273, K280, and Y281. The Cytoplasmic portion of the chain corresponds to 290 to 298 (YYKSTEGWS). A helical transmembrane segment spans residues 299–308 (IGNVLLDFTG). The L-cystine site is built by N301 and D305. D305 is a H(+) binding site. The Lumenal segment spans residues 309–331 (GSFSLLQMFLQSYNNDQWTLIFG). Residues 332–354 (DPTKFGLGVFSIVFDVVFFIQHF) form a helical membrane-spanning segment. D346 serves as a coordination point for H(+). At 355 to 367 (CLYRKRPGYDQLN) the chain is on the cytoplasmic side. Residues 362-366 (GYDQL) carry the Lysosomal targeting motif motif.

Belongs to the cystinosin family. Interacts with components of the V-ATPase complex. Interacts with components of the Ragulator complex. Interacts with RRAGA/RagA and RRAGC/RagC. Interacts with AP-3 complex subunit mu (AP3M1 or AP3M2). Strongly expressed in pancreas, kidney (adult and fetal), skeletal muscle, melanocytes and keratinocytes. Expressed at lower levels in placenta and heart. Weakly expressed in lung, liver and brain (adult and fetal). In terms of tissue distribution, represents 5-20 % of CTNS transcripts, with the exception of the testis that expresses both isoforms in equal proportions.

The protein localises to the lysosome membrane. Its subcellular location is the melanosome membrane. It localises to the cell membrane. The enzyme catalyses L-cystine(out) + H(+)(out) = L-cystine(in) + H(+)(in). With respect to regulation, switches between a lumen- and a cytosol-open conformation: pH induces conformational changes and shifts the equilibrium to facilitate the transition between the lumen- and cytosol-open conformation, thereby promoting cystine transport. Protonation of specific aspartate residues (Asp-205, Asp-305 and Asp-346) favors the cytosol-open conformation. In terms of biological role, cystine/H(+) symporter that mediates export of cystine, the oxidized dimer of cysteine, from lysosomes. Plays an important role in melanin synthesis by catalyzing cystine export from melanosomes, possibly by inhibiting pheomelanin synthesis. In addition to cystine export, also acts as a positive regulator of mTORC1 signaling in kidney proximal tubular cells, via interactions with components of the v-ATPase and Ragulator complexes. Also involved in small GTPase-regulated vesicle trafficking and lysosomal localization of LAMP2A, independently of cystine transporter activity. This Homo sapiens (Human) protein is Cystinosin.